The chain runs to 270 residues: Formamidopyrimidine-DNA glycosylase (270 aa).

Pro2 acts as the Schiff-base intermediate with DNA in catalysis. Glu3 serves as the catalytic Proton donor. Lys58 functions as the Proton donor; for beta-elimination activity in the catalytic mechanism. The DNA site is built by His91, Arg110, and Lys151. An FPG-type zinc finger spans residues Phe236–Arg270. The active-site Proton donor; for delta-elimination activity is the Arg260.

It belongs to the FPG family. Monomer. Zn(2+) is required as a cofactor.

The enzyme catalyses Hydrolysis of DNA containing ring-opened 7-methylguanine residues, releasing 2,6-diamino-4-hydroxy-5-(N-methyl)formamidopyrimidine.. It carries out the reaction 2'-deoxyribonucleotide-(2'-deoxyribose 5'-phosphate)-2'-deoxyribonucleotide-DNA = a 3'-end 2'-deoxyribonucleotide-(2,3-dehydro-2,3-deoxyribose 5'-phosphate)-DNA + a 5'-end 5'-phospho-2'-deoxyribonucleoside-DNA + H(+). Its function is as follows. Involved in base excision repair of DNA damaged by oxidation or by mutagenic agents. Acts as a DNA glycosylase that recognizes and removes damaged bases. Has a preference for oxidized purines, such as 7,8-dihydro-8-oxoguanine (8-oxoG). Has AP (apurinic/apyrimidinic) lyase activity and introduces nicks in the DNA strand. Cleaves the DNA backbone by beta-delta elimination to generate a single-strand break at the site of the removed base with both 3'- and 5'-phosphates. The protein is Formamidopyrimidine-DNA glycosylase of Pseudomonas fluorescens (strain SBW25).